Reading from the N-terminus, the 32-residue chain is MSALSYFFAAYCIGWVISHSILVFKKLSEVST.

The chain crosses the membrane as a helical span at residues Leu4 to Phe24.

The protein belongs to the inovirus G9P protein family.

The protein localises to the virion. It localises to the host membrane. In terms of biological role, may initiate with G7P the virion concomitant assembly-budding process, by interacting with the packaging signal of the viral genome. The assembly-budding takes place at the host inner membrane. In turn, G7P and G9P are present at the end of the filamentous virion that emerges first from the bacterial host. The sequence is that of Tail virion protein G9P (IX) from Escherichia phage If1 (Bacteriophage If1).